Consider the following 34-residue polypeptide: Leader peptide SpeFL (34 aa).

A sensor domain region spans residues 1–13 (MENNSRTMPHIRR). The short motif at 10–16 (HIRRTTH) is the Ornithine recognition loop element. Arginine 13 is an L-ornithine binding site. The effector domain stretch occupies residues 14 to 34 (TTHIMKFAHRNSFDFHFFNAR).

The protein belongs to the speF operon leader peptide family. Binds ornithine in stalled 70S ribosomes, blocking the upper two-thirds of the exit tunnel. Contacts 23S rRNA and ribosomal proteins L4 and L22.

Functionally, a small protein (arrest peptide) encoded upstream of inducible ornithine carboxylase gene (speF) that controls expression of downstream genes (speF and patE) by nascent chain-translational arrest and transcriptional attenuation. In the presence of ornithine a toeprint due to ribosomal arrest can be seen on the speFL transcript. Only L-ornithine (not other tested amino acids) has this effect. It is thought that in the presence of ornithine, ribosomal stalling on speFL prevents binding of Rho transcription termination factor to a downstream rut site allowing transcription of the operon. In the absence of ornithine, ribosomes terminate translation and are recycled, exposing the rut site allowing Rho to bind and prematurely terminate transcription. The presence of a pair of rare Arg codons could slow down translation to prevent polysome accumulation and to expose the rut site to Rho. The chain is Leader peptide SpeFL from Escherichia coli (strain K12).